We begin with the raw amino-acid sequence, 257 residues long: Thioredoxin-dependent peroxide reductase, mitochondrial (257 aa).

A mitochondrion-targeting transit peptide spans 1-62; the sequence is MAATAGRLFR…FAFSTSSSYH (62 aa). In terms of domain architecture, Thioredoxin spans 64 to 222; it reads PAVTQHAPYF…TLRLVKAFQF (159 aa). An N6-succinyllysine modification is found at Lys84. Lys92 is modified (N6-acetyllysine; alternate). At Lys92 the chain carries N6-succinyllysine; alternate. Cys109 serves as the catalytic Cysteine sulfenic acid (-SOH) intermediate. Residue Thr147 is modified to Phosphothreonine.

This sequence belongs to the peroxiredoxin family. AhpC/Prx1 subfamily. In terms of assembly, homodimer; disulfide-linked, upon oxidation. 6 homodimers assemble to form a ring-like dodecamer. Interacts with NEK6. Interacts with LRRK2. Interacts with MAP3K13. Interacts with RPS6KC1 (via PX domain). Phosphorylated by LRRK2; phosphorylation reduces perodixase activity. In terms of processing, the enzyme can be inactivated by further oxidation of the cysteine sulfenic acid (C(P)-SOH) to sulphinic acid (C(P)-SO2H) and sulphonic acid (C(P)-SO3H) instead of its condensation to a disulfide bond. Post-translationally, S-palmitoylated. As to expression, predominantly expressed in adrenal cortex. Also detected in liver, renal cortex and medulla, and adrenal medulla (at protein level).

It localises to the mitochondrion matrix. The protein localises to the cytoplasm. The protein resides in the early endosome. The enzyme catalyses a hydroperoxide + [thioredoxin]-dithiol = an alcohol + [thioredoxin]-disulfide + H2O. Its function is as follows. Thiol-specific peroxidase that catalyzes the reduction of hydrogen peroxide and organic hydroperoxides to water and alcohols, respectively. Plays a role in cell protection against oxidative stress by detoxifying peroxides. Acts synergistically with MAP3K13 to regulate the activation of NF-kappa-B in the cytosol. Required for the maintenance of physical strength. The protein is Thioredoxin-dependent peroxide reductase, mitochondrial (PRDX3) of Bos taurus (Bovine).